The sequence spans 477 residues: MPESRMPPRKLHIKSYGCQMNVYDAQRMADTLAVEGYVETTSAEDADLVILNTCHIREKASEKVYSELGRLRAAKDQAARDGRGMNIVVAGCVAQAEGEEIIRRAPMVDVVVGPQSYHHLPQLLARAKTCGRALETEFPVADKFGFLPQPSRQAIRSRGISAFVTVQEGCDKFCTFCVVPYTRGAEASRPVAKVVEDVRRLADNGVREITLIGQNVNAYHGEGPDGRPWPFGKLLYRLAGIPGIVRLRYSTSHPRDVEDTLIDAHRDLDALMPFVHLPVQSGSDRILAAMNRRHTADDYRRVIDRFRQARPDIAFSSDFIVGFPGETEEDFAATLALVGQIGYAAAYSFKYSPRPGTPAADMQETVSTADMDQRLVQLQNLIDSQQSAFNRTALGRTIDVLFDRAGRKPGQIVGRTAYLQPAHVEASDAIIGQVLPVTVASLERYSLFGTLASKPTSGEPSNHAATGGAQFQTTAGA.

An MTTase N-terminal domain is found at 9–129; it reads RKLHIKSYGC…LPQLLARAKT (121 aa). Positions 18, 54, 92, 170, 174, and 177 each coordinate [4Fe-4S] cluster. Positions 156 to 386 constitute a Radical SAM core domain; the sequence is RSRGISAFVT…QLQNLIDSQQ (231 aa). The TRAM domain occupies 391-453; it reads RTALGRTIDV…RYSLFGTLAS (63 aa). The segment at 454-477 is disordered; it reads KPTSGEPSNHAATGGAQFQTTAGA. Over residues 464 to 477 the composition is skewed to low complexity; that stretch reads AATGGAQFQTTAGA.

The protein belongs to the methylthiotransferase family. MiaB subfamily. As to quaternary structure, monomer. It depends on [4Fe-4S] cluster as a cofactor.

The protein resides in the cytoplasm. The enzyme catalyses N(6)-dimethylallyladenosine(37) in tRNA + (sulfur carrier)-SH + AH2 + 2 S-adenosyl-L-methionine = 2-methylsulfanyl-N(6)-dimethylallyladenosine(37) in tRNA + (sulfur carrier)-H + 5'-deoxyadenosine + L-methionine + A + S-adenosyl-L-homocysteine + 2 H(+). Catalyzes the methylthiolation of N6-(dimethylallyl)adenosine (i(6)A), leading to the formation of 2-methylthio-N6-(dimethylallyl)adenosine (ms(2)i(6)A) at position 37 in tRNAs that read codons beginning with uridine. This is tRNA-2-methylthio-N(6)-dimethylallyladenosine synthase from Nitrobacter winogradskyi (strain ATCC 25391 / DSM 10237 / CIP 104748 / NCIMB 11846 / Nb-255).